Consider the following 630-residue polypeptide: Mannosyl-oligosaccharide 1,2-alpha-mannosidase IC (630 aa).

Over 1–22 (MLMRKVPGFVPASPWGLRLPQK) the chain is Cytoplasmic. The helical; Signal-anchor for type II membrane protein transmembrane segment at 23–43 (FLFLLFLSGLVTLCFGALFLL) threads the bilayer. Residues 44 to 630 (PHSSRLKRLF…DSSGRAWGRH (587 aa)) are Lumenal-facing. The disordered stretch occupies residues 74–140 (PAREQEPPPN…ASRPGDEGVP (67 aa)). A compositionally biased stretch (pro residues) spans 80–89 (PPPNPAPAAP). Over residues 102 to 113 (PRRRKGGLRRTR) the composition is skewed to basic residues. Serine 164 is subject to Phosphoserine. An N-linked (GlcNAc...) asparagine glycan is attached at asparagine 250. A disulfide bridge links cysteine 453 with cysteine 485. Glutamate 499 functions as the Proton donor in the catalytic mechanism. Position 610 (threonine 610) interacts with Ca(2+). Asparagine 618 carries an N-linked (GlcNAc...) asparagine glycan.

The protein belongs to the glycosyl hydrolase 47 family. It depends on Ca(2+) as a cofactor. Expressed in most tissues with the exception of lung, muscle and pancreas. Highly expressed in placenta.

It localises to the golgi apparatus membrane. It carries out the reaction N(4)-(alpha-D-Man-(1-&gt;2)-alpha-D-Man-(1-&gt;2)-alpha-D-Man-(1-&gt;3)-[alpha-D-Man-(1-&gt;2)-alpha-D-Man-(1-&gt;3)-[alpha-D-Man-(1-&gt;2)-alpha-D-Man-(1-&gt;6)]-alpha-D-Man-(1-&gt;6)]-beta-D-Man-(1-&gt;4)-beta-D-GlcNAc-(1-&gt;4)-beta-D-GlcNAc)-L-asparaginyl-[protein] (N-glucan mannose isomer 9A1,2,3B1,2,3) + 4 H2O = N(4)-(alpha-D-Man-(1-&gt;3)-[alpha-D-Man-(1-&gt;3)-[alpha-D-Man-(1-&gt;6)]-alpha-D-Man-(1-&gt;6)]-beta-D-Man-(1-&gt;4)-beta-D-GlcNAc-(1-&gt;4)-beta-D-GlcNAc)-L-asparaginyl-[protein] (N-glucan mannose isomer 5A1,2) + 4 beta-D-mannose. The catalysed reaction is N(4)-(alpha-D-Man-(1-&gt;2)-alpha-D-Man-(1-&gt;2)-alpha-D-Man-(1-&gt;3)-[alpha-D-Man-(1-&gt;3)-[alpha-D-Man-(1-&gt;2)-alpha-D-Man-(1-&gt;6)]-alpha-D-Man-(1-&gt;6)]-beta-D-Man-(1-&gt;4)-beta-D-GlcNAc-(1-&gt;4)-beta-D-GlcNAc)-L-asparaginyl-[protein] (N-glucan mannose isomer 8A1,2,3B1,3) + 3 H2O = N(4)-(alpha-D-Man-(1-&gt;3)-[alpha-D-Man-(1-&gt;3)-[alpha-D-Man-(1-&gt;6)]-alpha-D-Man-(1-&gt;6)]-beta-D-Man-(1-&gt;4)-beta-D-GlcNAc-(1-&gt;4)-beta-D-GlcNAc)-L-asparaginyl-[protein] (N-glucan mannose isomer 5A1,2) + 3 beta-D-mannose. It participates in protein modification; protein glycosylation. Its activity is regulated as follows. Inhibited by both 1-deoxymannojirimycin and kifunensine. Functionally, involved in the maturation of Asn-linked oligosaccharides. Trim alpha-1,2-linked mannose residues from Man(9)GlcNAc(2) to produce first Man(8)GlcNAc(2) then Man(6)GlcNAc and a small amount of Man(5)GlcNAc. This Homo sapiens (Human) protein is Mannosyl-oligosaccharide 1,2-alpha-mannosidase IC (MAN1C1).